A 349-amino-acid chain; its full sequence is N-acetyl-gamma-glutamyl-phosphate reductase (349 aa).

The active site involves Cys153.

It belongs to the NAGSA dehydrogenase family. Type 1 subfamily.

The protein localises to the cytoplasm. The enzyme catalyses N-acetyl-L-glutamate 5-semialdehyde + phosphate + NADP(+) = N-acetyl-L-glutamyl 5-phosphate + NADPH + H(+). Its pathway is amino-acid biosynthesis; L-arginine biosynthesis; N(2)-acetyl-L-ornithine from L-glutamate: step 3/4. Its function is as follows. Catalyzes the NADPH-dependent reduction of N-acetyl-5-glutamyl phosphate to yield N-acetyl-L-glutamate 5-semialdehyde. The polypeptide is N-acetyl-gamma-glutamyl-phosphate reductase (Magnetococcus marinus (strain ATCC BAA-1437 / JCM 17883 / MC-1)).